We begin with the raw amino-acid sequence, 345 residues long: Green-sensitive opsin (345 aa).

The Extracellular segment spans residues 1 to 37 (MENGTEGKNFYIPMNNRTGLVRSPYEYPQYYLADPWQ). 2 N-linked (GlcNAc...) asparagine glycosylation sites follow: Asn3 and Asn16. Residues 38–62 (FKLLGIYMFFLILTGFPINALTLVV) traverse the membrane as a helical segment. The Cytoplasmic segment spans residues 63–74 (TAQNKKLRQPLN). Residues 75-100 (FILVNLAVAGLIMVCFGFTVCIYSCM) form a helical membrane-spanning segment. The Extracellular segment spans residues 101–114 (VGYFSLGPLGCTIE). A disulfide bridge links Cys111 with Cys188. The helical transmembrane segment at 115 to 134 (GFMATLGGQVSLWSLVVLAI) threads the bilayer. Over 135 to 153 (ERYIVVCKPMGSFKFTATH) the chain is Cytoplasmic. The helical transmembrane segment at 154–177 (SAAGCAFTWIMASSCAVPPLVGWS) threads the bilayer. The Extracellular segment spans residues 178–203 (RYIPEGIQVSCGPDYYTLAPGFNNES). Residue Asn201 is glycosylated (N-linked (GlcNAc...) asparagine). The chain crosses the membrane as a helical span at residues 204 to 231 (FVMYMFSCHFCVPVFTIFFTYGSLVMTV). The Cytoplasmic segment spans residues 232-253 (KAAAAQQQDSASTQKAEKEVTR). Residues 254–277 (MCFLMVLGFLLAWVPYASYAAWIF) traverse the membrane as a helical segment. The Extracellular portion of the chain corresponds to 278–285 (FNRGAAFS). The helical transmembrane segment at 286-310 (AMSMAIPSFFSKSSALFNPIIYILL) threads the bilayer. Lys297 bears the N6-(retinylidene)lysine mark. Residues 311–345 (NKQFRNCMLATIGMGGMVEDETSVSTSKTEVSTAA) lie on the Cytoplasmic side of the membrane.

The protein belongs to the G-protein coupled receptor 1 family. Opsin subfamily. In terms of processing, phosphorylated on some or all of the serine and threonine residues present in the C-terminal region. As to expression, the color pigments are found in the cone photoreceptor cells.

It is found in the membrane. Its function is as follows. Visual pigments are the light-absorbing molecules that mediate vision. They consist of an apoprotein, opsin, covalently linked to cis-retinal. The chain is Green-sensitive opsin from Oryzias latipes (Japanese rice fish).